Here is a 396-residue protein sequence, read N- to C-terminus: Phosphoglycerate kinase (396 aa).

Residues 21–23 (DFN), arginine 36, 59–62 (HLGK), arginine 119, and arginine 156 each bind substrate. ATP contacts are provided by residues lysine 206, glycine 294, glutamate 325, and 352–355 (GGDS).

This sequence belongs to the phosphoglycerate kinase family. In terms of assembly, monomer.

It localises to the cytoplasm. It catalyses the reaction (2R)-3-phosphoglycerate + ATP = (2R)-3-phospho-glyceroyl phosphate + ADP. It participates in carbohydrate degradation; glycolysis; pyruvate from D-glyceraldehyde 3-phosphate: step 2/5. The chain is Phosphoglycerate kinase from Staphylococcus aureus (strain bovine RF122 / ET3-1).